The sequence spans 366 residues: Chalcone synthase B (366 aa).

Cys-172 is a catalytic residue.

This sequence belongs to the thiolase-like superfamily. Chalcone/stilbene synthases family.

The catalysed reaction is (E)-4-coumaroyl-CoA + 3 malonyl-CoA + 3 H(+) = 2',4,4',6'-tetrahydroxychalcone + 3 CO2 + 4 CoA. The protein operates within secondary metabolite biosynthesis; flavonoid biosynthesis. The primary product of this enzyme is 4,2',4',6'-tetrahydroxychalcone (also termed naringenin-chalcone or chalcone) which can under specific conditions spontaneously isomerize into naringenin. The chain is Chalcone synthase B (CHSB) from Ipomoea triloba (Trilobed morning glory).